The sequence spans 49 residues: Large ribosomal subunit protein eL40 (49 aa).

It belongs to the eukaryotic ribosomal protein eL40 family.

The protein is Large ribosomal subunit protein eL40 of Halorubrum lacusprofundi (strain ATCC 49239 / DSM 5036 / JCM 8891 / ACAM 34).